A 181-amino-acid chain; its full sequence is Adenylate kinase (181 aa).

Position 10–15 (10–15) interacts with ATP; that stretch reads GAGKGT. Positions 30 to 59 are NMP; the sequence is STGDLFRYNISNGTELGLEAKKYLDAGDLV. Residues threonine 31, arginine 36, 57 to 59, 85 to 88, and glutamine 92 each bind AMP; these read DLV and GYPR. Residues 126–132 are LID; that stretch reads GRGRDDD. Position 127 (arginine 127) interacts with ATP. Residues arginine 129 and arginine 140 each coordinate AMP. Residue glycine 166 coordinates ATP.

Belongs to the adenylate kinase family. As to quaternary structure, monomer.

Its subcellular location is the cytoplasm. It carries out the reaction AMP + ATP = 2 ADP. The protein operates within purine metabolism; AMP biosynthesis via salvage pathway; AMP from ADP: step 1/1. Functionally, catalyzes the reversible transfer of the terminal phosphate group between ATP and AMP. Plays an important role in cellular energy homeostasis and in adenine nucleotide metabolism. This is Adenylate kinase from Mycolicibacterium vanbaalenii (strain DSM 7251 / JCM 13017 / BCRC 16820 / KCTC 9966 / NRRL B-24157 / PYR-1) (Mycobacterium vanbaalenii).